We begin with the raw amino-acid sequence, 546 residues long: Glucose-6-phosphate isomerase (546 aa).

The Proton donor role is filled by Glu-357. Active-site residues include His-389 and Lys-509.

This sequence belongs to the GPI family.

Its subcellular location is the cytoplasm. The catalysed reaction is alpha-D-glucose 6-phosphate = beta-D-fructose 6-phosphate. Its pathway is carbohydrate biosynthesis; gluconeogenesis. The protein operates within carbohydrate degradation; glycolysis; D-glyceraldehyde 3-phosphate and glycerone phosphate from D-glucose: step 2/4. Its function is as follows. Catalyzes the reversible isomerization of glucose-6-phosphate to fructose-6-phosphate. This Anaeromyxobacter dehalogenans (strain 2CP-1 / ATCC BAA-258) protein is Glucose-6-phosphate isomerase.